Here is a 365-residue protein sequence, read N- to C-terminus: D-alanine--D-alanine ligase (365 aa).

An ATP-grasp domain is found at 140-346 (KKILRRHGLQ…YSQLLTDLIY (207 aa)). 173–228 (EKQLSYPIFVKPANLGSSVGISKVKNREELIQGIDLAVKYDMKCLAEEFIPGKEIE) provides a ligand contact to ATP. Aspartate 299, glutamate 313, and asparagine 315 together coordinate Mg(2+).

This sequence belongs to the D-alanine--D-alanine ligase family. It depends on Mg(2+) as a cofactor. Requires Mn(2+) as cofactor.

The protein resides in the cytoplasm. It catalyses the reaction 2 D-alanine + ATP = D-alanyl-D-alanine + ADP + phosphate + H(+). It functions in the pathway cell wall biogenesis; peptidoglycan biosynthesis. Cell wall formation. In Natranaerobius thermophilus (strain ATCC BAA-1301 / DSM 18059 / JW/NM-WN-LF), this protein is D-alanine--D-alanine ligase.